The following is a 231-amino-acid chain: Sec-independent protein translocase protein TatB (231 aa).

The chain crosses the membrane as a helical span at residues 1-21; the sequence is MFDIGFSELLLFGVIALIVLG. The tract at residues 77-168 is disordered; the sequence is MRREMAEMRG…SLKTDFNDNA (92 aa). Basic and acidic residues predominate over residues 101–111; sequence ASRDLVDDAKP. Polar residues predominate over residues 148–157; it reads SEQPSAQGDN.

The protein belongs to the TatB family. The Tat system comprises two distinct complexes: a TatABC complex, containing multiple copies of TatA, TatB and TatC subunits, and a separate TatA complex, containing only TatA subunits. Substrates initially bind to the TatABC complex, which probably triggers association of the separate TatA complex to form the active translocon.

The protein localises to the cell inner membrane. Part of the twin-arginine translocation (Tat) system that transports large folded proteins containing a characteristic twin-arginine motif in their signal peptide across membranes. Together with TatC, TatB is part of a receptor directly interacting with Tat signal peptides. TatB may form an oligomeric binding site that transiently accommodates folded Tat precursor proteins before their translocation. This chain is Sec-independent protein translocase protein TatB, found in Psychrobacter cryohalolentis (strain ATCC BAA-1226 / DSM 17306 / VKM B-2378 / K5).